Consider the following 352-residue polypeptide: Phospho-N-acetylmuramoyl-pentapeptide-transferase (352 aa).

A run of 10 helical transmembrane segments spans residues 10-30 (YMFF…ALFL), 67-87 (TMGG…CADL), 88-108 (NNFY…IGLV), 129-149 (LLSQ…MGIN), 159-179 (YALF…IISS), 191-211 (GLAT…LYLS), 227-247 (GLGE…GFLW), 255-275 (VFMG…LGIV), 280-300 (ILLL…ILQV), and 329-349 (KIIV…LISI).

It belongs to the glycosyltransferase 4 family. MraY subfamily. The cofactor is Mg(2+).

The protein localises to the cell inner membrane. It carries out the reaction UDP-N-acetyl-alpha-D-muramoyl-L-alanyl-gamma-D-glutamyl-meso-2,6-diaminopimeloyl-D-alanyl-D-alanine + di-trans,octa-cis-undecaprenyl phosphate = di-trans,octa-cis-undecaprenyl diphospho-N-acetyl-alpha-D-muramoyl-L-alanyl-D-glutamyl-meso-2,6-diaminopimeloyl-D-alanyl-D-alanine + UMP. It functions in the pathway cell wall biogenesis; peptidoglycan biosynthesis. In terms of biological role, catalyzes the initial step of the lipid cycle reactions in the biosynthesis of the cell wall peptidoglycan: transfers peptidoglycan precursor phospho-MurNAc-pentapeptide from UDP-MurNAc-pentapeptide onto the lipid carrier undecaprenyl phosphate, yielding undecaprenyl-pyrophosphoryl-MurNAc-pentapeptide, known as lipid I. The protein is Phospho-N-acetylmuramoyl-pentapeptide-transferase of Campylobacter lari (strain RM2100 / D67 / ATCC BAA-1060).